Consider the following 1693-residue polypeptide: 1-phosphatidylinositol 4,5-bisphosphate phosphodiesterase eta-1 (1693 aa).

Positions 20–128 (SVMQSGTQMI…WITGLKYLMA (109 aa)) constitute a PH domain. 3 EF-hand domains span residues 142–177 (THDQ…LNVN), 178–214 (LPRR…MSLR), and 226–246 (DKKD…EQKM). Positions 155, 157, 159, and 166 each coordinate Ca(2+). Residues 299–444 (QDMDQPLCNY…LKGKILVKGK (146 aa)) form the PI-PLC X-box domain. Residue His-314 is part of the active site. 3 residues coordinate Ca(2+): Asn-315, Glu-344, and Asp-346. His-358 is an active-site residue. Glu-393 is a Ca(2+) binding site. Substrate-binding residues include Lys-442 and Lys-444. The segment at 526-585 (LNAHLKQSPDVKESGKKSHGRSLMTNFGKHKKTTKSRSKSYSTDDEEDTQQSTGKEGGQL) is disordered. The span at 532-541 (QSPDVKESGK) shows a compositional bias: basic and acidic residues. A compositionally biased stretch (basic residues) spans 553–563 (GKHKKTTKSRS). Residues 601 to 714 (LSDLVVYTNS…GYVLKPQQMC (114 aa)) form the PI-PLC Y-box domain. The substrate site is built by Ser-627 and Arg-654. In terms of domain architecture, C2 spans 715–843 (KGTFNPFSGD…PGYRHVYLEG (129 aa)). Residues Ile-758, Asp-760, Asp-784, Asp-813, His-814, and Asp-815 each contribute to the Ca(2+) site. Positions 992–1005 (IEGKENSLAEDKDG) are enriched in basic and acidic residues. 4 disordered regions span residues 992 to 1014 (IEGK…ASIK), 1052 to 1089 (TGEQ…PKQH), 1300 to 1329 (LESN…ETLK), and 1578 to 1613 (LSSR…GAGV). Residues 1065–1086 (RTTSNATSNCQENPCPSKSLSP) are compositionally biased toward polar residues. The segment covering 1592 to 1601 (RAKEKQEANK) has biased composition (basic and acidic residues).

Ca(2+) is required as a cofactor. In terms of tissue distribution, expressed in brain and to a lower extent in lung. In brain, it is found in cerebrum, cerebellum and spinal cord. In embryo expressed in the notochord, developing spinal cord (in a ventral to dorsal gradient), dorsal root ganglia, cerebellum and dermatomyosome.

It is found in the cytoplasm. Its subcellular location is the membrane. It catalyses the reaction a 1,2-diacyl-sn-glycero-3-phospho-(1D-myo-inositol-4,5-bisphosphate) + H2O = 1D-myo-inositol 1,4,5-trisphosphate + a 1,2-diacyl-sn-glycerol + H(+). Its function is as follows. The production of the second messenger molecules diacylglycerol (DAG) and inositol 1,4,5-trisphosphate (IP3) is mediated by calcium-activated phosphatidylinositol-specific phospholipase C enzymes. This is 1-phosphatidylinositol 4,5-bisphosphate phosphodiesterase eta-1 from Homo sapiens (Human).